The primary structure comprises 309 residues: Ribonuclease Z (309 aa).

Positions 63, 65, 67, 68, 145, 216, and 274 each coordinate Zn(2+). The Proton acceptor role is filled by D67.

This sequence belongs to the RNase Z family. Homodimer. Zn(2+) serves as cofactor.

It catalyses the reaction Endonucleolytic cleavage of RNA, removing extra 3' nucleotides from tRNA precursor, generating 3' termini of tRNAs. A 3'-hydroxy group is left at the tRNA terminus and a 5'-phosphoryl group is left at the trailer molecule.. Its function is as follows. Zinc phosphodiesterase, which displays some tRNA 3'-processing endonuclease activity. Probably involved in tRNA maturation, by removing a 3'-trailer from precursor tRNA. The protein is Ribonuclease Z of Streptococcus thermophilus (strain CNRZ 1066).